Consider the following 72-residue polypeptide: Translation initiation factor IF-1 (72 aa).

The S1-like domain occupies 1–72 (MSKQTAIEQD…TKGRISFRYK (72 aa)).

This sequence belongs to the IF-1 family. As to quaternary structure, component of the 30S ribosomal translation pre-initiation complex which assembles on the 30S ribosome in the order IF-2 and IF-3, IF-1 and N-formylmethionyl-tRNA(fMet); mRNA recruitment can occur at any time during PIC assembly.

It is found in the cytoplasm. Functionally, one of the essential components for the initiation of protein synthesis. Stabilizes the binding of IF-2 and IF-3 on the 30S subunit to which N-formylmethionyl-tRNA(fMet) subsequently binds. Helps modulate mRNA selection, yielding the 30S pre-initiation complex (PIC). Upon addition of the 50S ribosomal subunit IF-1, IF-2 and IF-3 are released leaving the mature 70S translation initiation complex. This is Translation initiation factor IF-1 from Porphyromonas gingivalis (strain ATCC BAA-308 / W83).